We begin with the raw amino-acid sequence, 265 residues long: Glutamate racemase (265 aa).

Residues 12–13 and 44–45 each bind substrate; these read DS and YG. Residue Cys-75 is the Proton donor/acceptor of the active site. Residue 76–77 coordinates substrate; that stretch reads NT. Cys-186 functions as the Proton donor/acceptor in the catalytic mechanism. 187–188 is a substrate binding site; the sequence is TH.

The protein belongs to the aspartate/glutamate racemases family.

The enzyme catalyses L-glutamate = D-glutamate. It participates in cell wall biogenesis; peptidoglycan biosynthesis. Functionally, provides the (R)-glutamate required for cell wall biosynthesis. This is Glutamate racemase from Pseudomonas putida (strain ATCC 47054 / DSM 6125 / CFBP 8728 / NCIMB 11950 / KT2440).